We begin with the raw amino-acid sequence, 182 residues long: MVKALLVGSKVLIPNVDESRYIYSNGFYGKAVGISKPKDPKDIIRPLELSLIESVYLAKKGLIKVIDKNGEVLEYEKLYEYSSKIINKFDIMYRVYEDLREKGFIVRSGVKYGADFAVYTLGPGLEHAPYVVIAVDIDEEITPHELLSFGRVSHSTRKRLVLALVDRKSESVRYIMFKWVKM.

Active-site residues include Tyr-119, His-127, and Lys-158.

It belongs to the tRNA-intron endonuclease family. Archaeal short subfamily. In terms of assembly, homotetramer; although the tetramer contains four active sites, only two participate in the cleavage. Therefore, it should be considered as a dimer of dimers.

The catalysed reaction is pretRNA = a 3'-half-tRNA molecule with a 5'-OH end + a 5'-half-tRNA molecule with a 2',3'-cyclic phosphate end + an intron with a 2',3'-cyclic phosphate and a 5'-hydroxyl terminus.. Its function is as follows. Endonuclease that removes tRNA introns. Cleaves pre-tRNA at the 5'- and 3'-splice sites to release the intron. The products are an intron and two tRNA half-molecules bearing 2',3' cyclic phosphate and 5'-OH termini. Recognizes a pseudosymmetric substrate in which 2 bulged loops of 3 bases are separated by a stem of 4 bp. The sequence is that of tRNA-splicing endonuclease from Saccharolobus islandicus (strain Y.N.15.51 / Yellowstone #2) (Sulfolobus islandicus).